The following is a 364-amino-acid chain: DNA polymerase IV (364 aa).

Residues 14–198 enclose the UmuC domain; sequence IIHIDMDAFF…LPIEKFHGVG (185 aa). Residues Asp-18 and Asp-116 each coordinate Mg(2+). Glu-117 is an active-site residue.

This sequence belongs to the DNA polymerase type-Y family. In terms of assembly, monomer. Requires Mg(2+) as cofactor.

It localises to the cytoplasm. The enzyme catalyses DNA(n) + a 2'-deoxyribonucleoside 5'-triphosphate = DNA(n+1) + diphosphate. In terms of biological role, poorly processive, error-prone DNA polymerase involved in untargeted mutagenesis. Copies undamaged DNA at stalled replication forks, which arise in vivo from mismatched or misaligned primer ends. These misaligned primers can be extended by PolIV. Exhibits no 3'-5' exonuclease (proofreading) activity. May be involved in translesional synthesis, in conjunction with the beta clamp from PolIII. The polypeptide is DNA polymerase IV (Streptococcus pyogenes serotype M18 (strain MGAS8232)).